The chain runs to 336 residues: MREEQPHLATTWAARGWVEEEGIGSATLGRLVRAWPRRAAVVNKADILDEWADYDTLVPDYPLEIVPFAEHPLFLAAEPHQRQRVLTGMWIGYNERVIATEQLIAEPAFDLVMHGVFPGSDDPLIRKSVQQAIVDESFHTYMHMLAIDRTRELRKISERPPQPELVTYRRLRRVLADMPEQWERDIAVLVWGAVAETCINALLALLARDATIQPMHSLITTLHLRDETAHGSIVVEVVRELYARMNEQQRRALVRCLPIALEAFAEQDLSALLLELNAAGIRGAEEIVGDLRSTAGGTRLVRDFSGARKMVEQLGLDDAVDFDFPERPDWSPHTPR.

Y93 contacts 4-nitrobenzoate. The Fe cation site is built by E101, E136, H139, and E196. Residue N200 coordinates 4-nitrobenzoate. Fe cation is bound by residues H223, E227, and H230.

This sequence belongs to the AurF N-oxygenase family. Homodimer. Requires Fe(2+) as cofactor.

It carries out the reaction 4-aminobenzoate + AH2 + 2 O2 = 4-nitrobenzoate + A + 2 H2O. It participates in antibiotic biosynthesis. Involved in the biosynthesis of the polyketide antibiotic aureothin. Catalyzes the oxidation of p-aminobenzoate (pABA) to p-nitrobenzoate (pNBA), an unusual polyketide synthase starter unit. Reaction mechanism involves the generation of a peroxodiiron(III/III) intermediate, which effects the initial oxidation of p-aminobenzoate to p-hydroxylaminobenzoate (Ar-NHOH). Ar-NHOH is then probably directly converted to the fully oxidized p-nitrobenzoate via a four-electron N-oxidation, bypassing the formation of a nitroso compound. In Streptomyces thioluteus, this protein is 4-aminobenzoate N-oxygenase.